We begin with the raw amino-acid sequence, 315 residues long: Ribosomal RNA small subunit methyltransferase H (315 aa).

S-adenosyl-L-methionine-binding positions include 35 to 37, D55, F79, D101, and Q108; that span reads GGH.

Belongs to the methyltransferase superfamily. RsmH family.

It localises to the cytoplasm. The enzyme catalyses cytidine(1402) in 16S rRNA + S-adenosyl-L-methionine = N(4)-methylcytidine(1402) in 16S rRNA + S-adenosyl-L-homocysteine + H(+). In terms of biological role, specifically methylates the N4 position of cytidine in position 1402 (C1402) of 16S rRNA. The chain is Ribosomal RNA small subunit methyltransferase H from Photobacterium profundum (strain SS9).